A 708-amino-acid chain; its full sequence is Probable GTP diphosphokinase RSH3, chloroplastic (708 aa).

Disordered stretches follow at residues 1–50 (MSLP…AAGG) and 109–134 (HSPV…SWLA). Residues 1–58 (MSLPAISLYTSPPPGAVYSSEFDPSSRGSSPPCSTAPPSTSHRPPAAAGGLSCLFSSP) constitute a chloroplast transit peptide. Low complexity-rich tracts occupy residues 29–41 (SSPP…PSTS) and 118–131 (PSSS…PPAS). The HD domain maps to 233-337 (YLQHCVETAV…IKLADRVHNM (105 aa)).

Belongs to the RelA/SpoT family.

It is found in the plastid. The protein localises to the chloroplast. The enzyme catalyses GTP + ATP = guanosine 3'-diphosphate 5'-triphosphate + AMP. Probable ppGpp (guanosine 3'-diphosphate 5'-diphosphate) synthetase that may be involved in a rapid plant ppGpp-mediated response to pathogens and other stresses. The polypeptide is Probable GTP diphosphokinase RSH3, chloroplastic (RSH3) (Oryza sativa subsp. japonica (Rice)).